Reading from the N-terminus, the 42-residue chain is MSNVGTTGRIPLWLIATVAGILVLTVVGIFFYGSYSGLGSSL.

Residues 10–30 (IPLWLIATVAGILVLTVVGIF) form a helical membrane-spanning segment.

Belongs to the PsbJ family. PSII is composed of 1 copy each of membrane proteins PsbA, PsbB, PsbC, PsbD, PsbE, PsbF, PsbH, PsbI, PsbJ, PsbK, PsbL, PsbM, PsbT, PsbX, PsbY, PsbZ, Psb30/Ycf12, at least 3 peripheral proteins of the oxygen-evolving complex and a large number of cofactors. It forms dimeric complexes.

The protein resides in the plastid. The protein localises to the chloroplast thylakoid membrane. One of the components of the core complex of photosystem II (PSII). PSII is a light-driven water:plastoquinone oxidoreductase that uses light energy to abstract electrons from H(2)O, generating O(2) and a proton gradient subsequently used for ATP formation. It consists of a core antenna complex that captures photons, and an electron transfer chain that converts photonic excitation into a charge separation. The polypeptide is Photosystem II reaction center protein J (Chara vulgaris (Common stonewort)).